The following is a 258-amino-acid chain: Deoxyribose-phosphate aldolase (258 aa).

D102 acts as the Proton donor/acceptor in catalysis. Residue K165 is the Schiff-base intermediate with acetaldehyde of the active site. Catalysis depends on K199, which acts as the Proton donor/acceptor.

Belongs to the DeoC/FbaB aldolase family. DeoC type 2 subfamily.

It localises to the cytoplasm. The catalysed reaction is 2-deoxy-D-ribose 5-phosphate = D-glyceraldehyde 3-phosphate + acetaldehyde. It functions in the pathway carbohydrate degradation; 2-deoxy-D-ribose 1-phosphate degradation; D-glyceraldehyde 3-phosphate and acetaldehyde from 2-deoxy-alpha-D-ribose 1-phosphate: step 2/2. Functionally, catalyzes a reversible aldol reaction between acetaldehyde and D-glyceraldehyde 3-phosphate to generate 2-deoxy-D-ribose 5-phosphate. This chain is Deoxyribose-phosphate aldolase, found in Aliivibrio salmonicida (strain LFI1238) (Vibrio salmonicida (strain LFI1238)).